Consider the following 460-residue polypeptide: Benzyl alcohol O-benzoyltransferase (460 aa).

Active-site proton acceptor residues include His-167 and Asp-382.

This sequence belongs to the plant acyltransferase family. In terms of tissue distribution, specifically expressed in flowers, mainly in the limb of flowers corollas, and, at low levels, in roots, stems, sepals and leaves.

It carries out the reaction benzyl alcohol + benzoyl-CoA = benzyl benzoate + CoA. The catalysed reaction is benzyl alcohol + acetyl-CoA = benzyl acetate + CoA. It catalyses the reaction 3-hydroxybenzyl alcohol + acetyl-CoA = 3-hydroxy-benzyl acetate + CoA. The enzyme catalyses 3-hydroxybenzyl alcohol + benzoyl-CoA = 3-hydroxy-benzyl benzoate + CoA. It carries out the reaction 2-phenylethanol + benzoyl-CoA = phenethyl benzoate + CoA. The catalysed reaction is (3Z)-hex-3-en-1-ol + benzoyl-CoA = (3Z)-hex-3-en-1-yl benzoate + CoA. It catalyses the reaction (2E)-geraniol + acetyl-CoA = (2E)-geranyl acetate + CoA. The enzyme catalyses butan-1-ol + benzoyl-CoA = butyl benzoate + CoA. It carries out the reaction (2E)-geraniol + benzoyl-CoA = (2E)-geranyl benzoate + CoA. The catalysed reaction is octan-1-ol + benzoyl-CoA = octyl benzoate + CoA. It functions in the pathway aromatic compound metabolism; benzoyl-CoA degradation. In terms of biological role, involved in the production of volatile organic compounds (VOCs), including floral volatile benzenoids and phenylpropanoids (FVBP), in flowers of fragrant cultivars (e.g. cv. Mitchell and cv. V26), scent attracting pollinators (e.g. the night-active hawkmoth pollinator Manduca sexta). Acyltransferase that catalyzes the transfer of benzoyl and acetyl moieties to a large variety of potential substrate alcohols, and involved in the formation of volatile esters benzyl benzoate and phenylethyl benzoate from benzoyl-CoA. With acetyl-CoA, mainly active on benzyl alcohol, and, to a lower extent, on 3-hydroxybenzyl alcohol, geraniol, and 2-phenylethanol, but barely active on butanol, 1-octanol, 4-hydroxy-benzyl alcohol, 2-hexanol, cis-3-hexen-1-ol and linalool. With benzoyl-CoA, mainly active on benzyl alcohol, but also efficient on several substrates, including 3-hydroxybenzyl alcohol, 2-phenylethanol, geraniol, butanol, cis-3-hexen-1-ol and 1-octanol. The chain is Benzyl alcohol O-benzoyltransferase from Petunia hybrida (Petunia).